The primary structure comprises 403 residues: 4-hydroxyphenylpyruvate dioxygenase (403 aa).

VOC domains are found at residues 25–169 (GYDH…LVER) and 201–359 (RIDH…LFTK). Positions 204, 287, and 370 each coordinate Fe cation.

Belongs to the 4HPPD family. As to quaternary structure, homodimer. The cofactor is Fe cation.

It catalyses the reaction 3-(4-hydroxyphenyl)pyruvate + O2 = homogentisate + CO2. It functions in the pathway amino-acid degradation; L-phenylalanine degradation; acetoacetate and fumarate from L-phenylalanine: step 3/6. Its function is as follows. 4-hydroxyphenylpyruvate dioxygenase; part of the L-tyrosine degradation gene cluster that mediates the biosynthesis of the brownish pigment pyomelanin as an alternative melanin. The 4-hydroxyphenylpyruvate dioxygenase hppD catalyzes the conversion of 4-hydroxyphenylpyruvate to homogentisic acid (HGA). The protein hmgX is crucial for this conversion and thus, probably functions as an accessory factor to mediate specific activity of hppD. The homogentisate 1,2-dioxygenase hmgA is then involved in the cleavage of the aromatic ring of HGA and its conversion to 4-maleylacetoacetate. When hmgA activity is lowered by the cell wall integrity (CWI) signaling pathway, HGA accumulates and leads to the production of pyomelanin through benzoquinone acetic acid after oxidation and polymerization. On the opposite, in non-stress conditions, both hppD and hmgA activities are balanced and HGA is degraded into 4-maleylacetoacetate. 4-maleylacetoacetate is further converted to 4-fumarylacetoacetate by the maleylacetoacetate isomerase maiA, which is degraded into fumarate and acetoacetate by the fumarylacetoacetase fahA. The sequence is that of 4-hydroxyphenylpyruvate dioxygenase from Aspergillus fumigatus (strain ATCC MYA-4609 / CBS 101355 / FGSC A1100 / Af293) (Neosartorya fumigata).